The chain runs to 255 residues: 4-hydroxy-tetrahydrodipicolinate reductase (255 aa).

Residues 8 to 13 (GANGRV), 88 to 90 (GTT), and 112 to 115 (ATNM) each bind NAD(+). The active-site Proton donor/acceptor is the histidine 144. Histidine 145 contributes to the (S)-2,3,4,5-tetrahydrodipicolinate binding site. Residue lysine 148 is the Proton donor of the active site. Residue 154–155 (GT) participates in (S)-2,3,4,5-tetrahydrodipicolinate binding.

This sequence belongs to the DapB family.

It localises to the cytoplasm. It carries out the reaction (S)-2,3,4,5-tetrahydrodipicolinate + NAD(+) + H2O = (2S,4S)-4-hydroxy-2,3,4,5-tetrahydrodipicolinate + NADH + H(+). The catalysed reaction is (S)-2,3,4,5-tetrahydrodipicolinate + NADP(+) + H2O = (2S,4S)-4-hydroxy-2,3,4,5-tetrahydrodipicolinate + NADPH + H(+). The protein operates within amino-acid biosynthesis; L-lysine biosynthesis via DAP pathway; (S)-tetrahydrodipicolinate from L-aspartate: step 4/4. In terms of biological role, catalyzes the conversion of 4-hydroxy-tetrahydrodipicolinate (HTPA) to tetrahydrodipicolinate. The polypeptide is 4-hydroxy-tetrahydrodipicolinate reductase (Sulfurimonas denitrificans (strain ATCC 33889 / DSM 1251) (Thiomicrospira denitrificans (strain ATCC 33889 / DSM 1251))).